Reading from the N-terminus, the 132-residue chain is Small ribosomal subunit protein uS11 (132 aa).

The tract at residues 1–24 (MAAPKQAARKPRRRDRKSVPVGQA) is disordered. Residues 7–16 (AARKPRRRDR) show a composition bias toward basic residues.

It belongs to the universal ribosomal protein uS11 family. Part of the 30S ribosomal subunit. Interacts with proteins S7 and S18. Binds to IF-3.

Functionally, located on the platform of the 30S subunit, it bridges several disparate RNA helices of the 16S rRNA. Forms part of the Shine-Dalgarno cleft in the 70S ribosome. The sequence is that of Small ribosomal subunit protein uS11 from Bifidobacterium longum (strain DJO10A).